We begin with the raw amino-acid sequence, 294 residues long: Putative S-adenosyl-L-methionine-dependent methyltransferase RHA1_ro00605 (294 aa).

S-adenosyl-L-methionine is bound by residues aspartate 120 and 149-150; that span reads DL.

This sequence belongs to the UPF0677 family.

Its function is as follows. Exhibits S-adenosyl-L-methionine-dependent methyltransferase activity. This is Putative S-adenosyl-L-methionine-dependent methyltransferase RHA1_ro00605 from Rhodococcus jostii (strain RHA1).